Consider the following 164-residue polypeptide: Xanthine-guanine phosphoribosyltransferase (164 aa).

Residues 41–42 (RG) and 98–106 (DDLTDTGKT) each bind 5-phospho-alpha-D-ribose 1-diphosphate. Residue aspartate 99 coordinates Mg(2+). Guanine-binding residues include aspartate 102 and isoleucine 145. 2 residues coordinate xanthine: aspartate 102 and isoleucine 145. Residues 102-106 (DTGKT) and 144-145 (WI) contribute to the GMP site.

It belongs to the purine/pyrimidine phosphoribosyltransferase family. XGPT subfamily. In terms of assembly, homotetramer. Mg(2+) serves as cofactor.

The protein localises to the cell inner membrane. It carries out the reaction GMP + diphosphate = guanine + 5-phospho-alpha-D-ribose 1-diphosphate. The catalysed reaction is XMP + diphosphate = xanthine + 5-phospho-alpha-D-ribose 1-diphosphate. The enzyme catalyses IMP + diphosphate = hypoxanthine + 5-phospho-alpha-D-ribose 1-diphosphate. It participates in purine metabolism; GMP biosynthesis via salvage pathway; GMP from guanine: step 1/1. Its pathway is purine metabolism; XMP biosynthesis via salvage pathway; XMP from xanthine: step 1/1. Its function is as follows. Purine salvage pathway enzyme that catalyzes the transfer of the ribosyl-5-phosphate group from 5-phospho-alpha-D-ribose 1-diphosphate (PRPP) to the N9 position of the 6-oxopurines guanine and xanthine to form the corresponding ribonucleotides GMP (guanosine 5'-monophosphate) and XMP (xanthosine 5'-monophosphate), with the release of PPi. To a lesser extent, also acts on hypoxanthine. The sequence is that of Xanthine-guanine phosphoribosyltransferase from Rhizobium johnstonii (strain DSM 114642 / LMG 32736 / 3841) (Rhizobium leguminosarum bv. viciae).